The chain runs to 373 residues: Probable tRNA sulfurtransferase (373 aa).

The THUMP domain occupies asparagine 54–isoleucine 158. Residues leucine 176 to phenylalanine 177, asparagine 201 to phenylalanine 202, lysine 256, glycine 278, and glutamine 287 contribute to the ATP site.

The protein belongs to the ThiI family.

The protein localises to the cytoplasm. The enzyme catalyses [ThiI sulfur-carrier protein]-S-sulfanyl-L-cysteine + a uridine in tRNA + 2 reduced [2Fe-2S]-[ferredoxin] + ATP + H(+) = [ThiI sulfur-carrier protein]-L-cysteine + a 4-thiouridine in tRNA + 2 oxidized [2Fe-2S]-[ferredoxin] + AMP + diphosphate. It carries out the reaction [ThiS sulfur-carrier protein]-C-terminal Gly-Gly-AMP + S-sulfanyl-L-cysteinyl-[cysteine desulfurase] + AH2 = [ThiS sulfur-carrier protein]-C-terminal-Gly-aminoethanethioate + L-cysteinyl-[cysteine desulfurase] + A + AMP + 2 H(+). Its pathway is cofactor biosynthesis; thiamine diphosphate biosynthesis. In terms of biological role, catalyzes the ATP-dependent transfer of a sulfur to tRNA to produce 4-thiouridine in position 8 of tRNAs, which functions as a near-UV photosensor. Also catalyzes the transfer of sulfur to the sulfur carrier protein ThiS, forming ThiS-thiocarboxylate. This is a step in the synthesis of thiazole, in the thiamine biosynthesis pathway. The sulfur is donated as persulfide by IscS. This is Probable tRNA sulfurtransferase from Saccharolobus islandicus (strain M.16.4 / Kamchatka #3) (Sulfolobus islandicus).